The following is a 140-amino-acid chain: MAIERTFSILKPDATKRNLTGAINALIEQAGLRIVAQKRIRMTRDQAETFYAVHKARPFFGELVDFMVSGPVVVQVLEGEGAVLKYRDVMGATDPSKAADGTIRKAHAQSIGENSVHGSDAPETAAIEIAQFFSGNEIVG.

6 residues coordinate ATP: Lys-11, Phe-59, Arg-87, Thr-93, Arg-104, and Asn-114. Residue His-117 is the Pros-phosphohistidine intermediate of the active site.

The protein belongs to the NDK family. As to quaternary structure, homotetramer. Requires Mg(2+) as cofactor.

It localises to the cytoplasm. The enzyme catalyses a 2'-deoxyribonucleoside 5'-diphosphate + ATP = a 2'-deoxyribonucleoside 5'-triphosphate + ADP. The catalysed reaction is a ribonucleoside 5'-diphosphate + ATP = a ribonucleoside 5'-triphosphate + ADP. Its function is as follows. Major role in the synthesis of nucleoside triphosphates other than ATP. The ATP gamma phosphate is transferred to the NDP beta phosphate via a ping-pong mechanism, using a phosphorylated active-site intermediate. This chain is Nucleoside diphosphate kinase, found in Rhodopseudomonas palustris (strain BisB18).